The primary structure comprises 235 residues: Octanoyltransferase (235 aa).

The 177-residue stretch at 59-235 (PGSSQAVWLL…KKSLTERFGL (177 aa)) folds into the BPL/LPL catalytic domain. Substrate contacts are provided by residues 101–108 (RGGEVTHH), 168–170 (SIG), and 181–183 (GLS). The active-site Acyl-thioester intermediate is the C199.

The protein belongs to the LipB family.

The protein localises to the cytoplasm. It catalyses the reaction octanoyl-[ACP] + L-lysyl-[protein] = N(6)-octanoyl-L-lysyl-[protein] + holo-[ACP] + H(+). It participates in protein modification; protein lipoylation via endogenous pathway; protein N(6)-(lipoyl)lysine from octanoyl-[acyl-carrier-protein]: step 1/2. Catalyzes the transfer of endogenously produced octanoic acid from octanoyl-acyl-carrier-protein onto the lipoyl domains of lipoate-dependent enzymes. Lipoyl-ACP can also act as a substrate although octanoyl-ACP is likely to be the physiological substrate. This chain is Octanoyltransferase, found in Prochlorococcus marinus (strain MIT 9211).